Here is a 1078-residue protein sequence, read N- to C-terminus: Phosphatidylinositol-3,5-bisphosphate 3-phosphatase MTMR4 (1078 aa).

Positions 154-571 (DHVKSRFQIE…RALQLWTAVY (418 aa)) constitute a Myotubularin phosphatase domain. The segment at 267–290 (RMPNGNPSNKGNNDGSDNSDTDFD) is disordered. The span at 270 to 282 (NGNPSNKGNNDGS) shows a compositional bias: low complexity. Asparagine 321, asparagine 346, and isoleucine 347 together coordinate a 1,2-diacyl-sn-glycero-3-phospho-(1D-myo-inositol-3,5-bisphosphate). Residues asparagine 321, asparagine 346, and isoleucine 347 each coordinate a 1,2-diacyl-sn-glycero-3-phospho-(1D-myo-inositol-3-phosphate). Cysteine 408 functions as the Phosphocysteine intermediate in the catalytic mechanism. Positions 409, 410, 411, 412, 413, 414, 450, and 454 each coordinate a 1,2-diacyl-sn-glycero-3-phospho-(1D-myo-inositol-3,5-bisphosphate). 6 residues coordinate a 1,2-diacyl-sn-glycero-3-phospho-(1D-myo-inositol-3-phosphate): serine 409, aspartate 410, glycine 411, tryptophan 412, aspartate 413, and arginine 414. Residue arginine 454 participates in a 1,2-diacyl-sn-glycero-3-phospho-(1D-myo-inositol-3-phosphate) binding. The span at 629–648 (SSDPNLNNHQGNLESCSSSK) shows a compositional bias: polar residues. The interval 629–694 (SSDPNLNNHQ…SGSATNQNNN (66 aa)) is disordered. A coiled-coil region spans residues 904–935 (VQQRLRQMEASYKQEVDLLRRQVWELQLQLEI). The disordered stretch occupies residues 960–982 (DGSDMDDLYSDKSEDRLSEASWE). Basic and acidic residues predominate over residues 968–982 (YSDKSEDRLSEASWE). The segment at 997 to 1057 (DHMASHCFNC…VCNTCYDHIQ (61 aa)) adopts an FYVE-type zinc-finger fold. Residues cysteine 1003, cysteine 1006, cysteine 1019, cysteine 1022, cysteine 1027, cysteine 1030, cysteine 1049, and cysteine 1052 each coordinate Zn(2+).

It belongs to the protein-tyrosine phosphatase family. Non-receptor class myotubularin subfamily. In terms of assembly, homooligomeric.

Its subcellular location is the early endosome membrane. The protein localises to the recycling endosome membrane. It is found in the late endosome membrane. The protein resides in the cytoplasmic vesicle. It localises to the phagosome membrane. The catalysed reaction is a 1,2-diacyl-sn-glycero-3-phospho-(1D-myo-inositol-3-phosphate) + H2O = a 1,2-diacyl-sn-glycero-3-phospho-(1D-myo-inositol) + phosphate. The enzyme catalyses a 1,2-diacyl-sn-glycero-3-phospho-(1D-myo-inositol-3,5-bisphosphate) + H2O = a 1,2-diacyl-sn-glycero-3-phospho-(1D-myo-inositol-5-phosphate) + phosphate. It catalyses the reaction 1,2-dioctanoyl-sn-glycero-3-phospho-(1-D-myo-inositol-3-phosphate) + H2O = 1,2-dioctanoyl-sn-glycero-3-phospho-(1D-myo-inositol) + phosphate. It carries out the reaction 1,2-dioctanoyl-sn-glycero-3-phospho-(1D-myo-inositol-3,5-bisphosphate) + H2O = 1,2-dioctanoyl-sn-glycero-3-phospho-(1D-myo-inositol-5-phosphate) + phosphate. Functionally, lipid phosphatase that specifically dephosphorylates the D-3 position of phosphatidylinositol 3-phosphate and phosphatidylinositol 3,5-bisphosphate, generating phosphatidylinositol and phosphatidylinositol 5-phosphate. Decreases the levels of phosphatidylinositol 3-phosphate, a phospholipid found in cell membranes where it acts as key regulator of both cell signaling and intracellular membrane traffic, in a subset of endosomal membranes to negatively regulate both endocytic recycling and trafficking and/or maturation of endosomes toward lysosomes. Through phosphatidylinositol 3-phosphate turnover in phagosome membranes regulates phagocytosis and phagosome maturation. By decreasing phosphatidylinositol 3-monophosphate (PI3P) levels in immune cells it can also regulate the innate immune response. Beside its lipid phosphatase activity, can also function as a molecular adapter to regulate midbody abscission during mitotic cytokinesis. Can also negatively regulate TGF-beta and BMP signaling through Smad proteins dephosphorylation and retention in endosomes. This Xenopus laevis (African clawed frog) protein is Phosphatidylinositol-3,5-bisphosphate 3-phosphatase MTMR4 (mtmr4).